The chain runs to 911 residues: Nitrate reductase [NADH] (911 aa).

A compositionally biased stretch (polar residues) spans 1–10 (MAASVENRQY). The tract at residues 1–71 (MAASVENRQY…SEDEDDDDEK (71 aa)) is disordered. The segment covering 61 to 71 (SSEDEDDDDEK) has biased composition (acidic residues). Position 188 (cysteine 188) interacts with Mo-molybdopterin. The Cytochrome b5 heme-binding domain occupies 536–611 (SKMYSMSEVR…LEDFRIGELI (76 aa)). The heme site is built by histidine 571 and histidine 594. Residues 654-766 (REKIPCKLVD…KGPLGHIEYQ (113 aa)) form the FAD-binding FR-type domain. Residues 706-709 (RAYT), 723-727 (VVKIY), phenylalanine 728, phenylalanine 735, 740-742 (QMS), and threonine 793 contribute to the FAD site.

The protein belongs to the nitrate reductase family. In terms of assembly, homodimer. FAD is required as a cofactor. It depends on heme as a cofactor. Requires Mo-molybdopterin as cofactor.

It catalyses the reaction nitrite + NAD(+) + H2O = nitrate + NADH + H(+). In terms of biological role, nitrate reductase is a key enzyme involved in the first step of nitrate assimilation in plants, fungi and bacteria. This Solanum lycopersicum (Tomato) protein is Nitrate reductase [NADH] (NIA).